A 106-amino-acid chain; its full sequence is MALDPSEQHLRHVEKDVLIPKIMREKARERCSEQVQDFTKCCKDSGVLMVVKCRKENSALKDCLTSYYKDPAFYEECKMEYLKEREEFRRTGIPTKKRLQKLPTSM.

N-acetylalanine is present on alanine 2. Positions 28 to 71 constitute a CHCH domain; the sequence is RERCSEQVQDFTKCCKDSGVLMVVKCRKENSALKDCLTSYYKDP. Short sequence motifs (cx9C motif) lie at residues 31–41 and 53–63; these read CSEQVQDFTKC and CRKENSALKDC. 2 cysteine pairs are disulfide-bonded: cysteine 31–cysteine 63 and cysteine 41–cysteine 53.

It belongs to the CMC family. In terms of assembly, component of the MITRAC (mitochondrial translation regulation assembly intermediate of cytochrome c oxidase complex) complex, the core components of this complex being COA3/MITRAC12 and COX14.

The protein resides in the mitochondrion. Its function is as follows. Component of the MITRAC (mitochondrial translation regulation assembly intermediate of cytochrome c oxidase complex) complex, that regulates cytochrome c oxidase assembly. This chain is COX assembly mitochondrial protein homolog (CMC1), found in Bos taurus (Bovine).